The following is a 396-amino-acid chain: S-adenosylmethionine synthase 2 (396 aa).

Glu13 is a Mg(2+) binding site. ATP is bound at residue His19. Residue Glu47 coordinates K(+). Positions 60 and 103 each coordinate L-methionine. Residues 171 to 173 (DGK), 239 to 242 (SGRF), Asp250, 256 to 257 (RK), Ala273, Lys277, and Lys281 contribute to the ATP site. Residue Asp250 coordinates L-methionine. Lys281 serves as a coordination point for L-methionine.

This sequence belongs to the AdoMet synthase family. As to quaternary structure, homotetramer. Mn(2+) is required as a cofactor. Requires Mg(2+) as cofactor. Co(2+) serves as cofactor. The cofactor is K(+).

The protein resides in the cytoplasm. The enzyme catalyses L-methionine + ATP + H2O = S-adenosyl-L-methionine + phosphate + diphosphate. It functions in the pathway amino-acid biosynthesis; S-adenosyl-L-methionine biosynthesis; S-adenosyl-L-methionine from L-methionine: step 1/1. Functionally, catalyzes the formation of S-adenosylmethionine from methionine and ATP. The reaction comprises two steps that are both catalyzed by the same enzyme: formation of S-adenosylmethionine (AdoMet) and triphosphate, and subsequent hydrolysis of the triphosphate. This Dianthus caryophyllus (Carnation) protein is S-adenosylmethionine synthase 2 (SAM2).